The sequence spans 894 residues: Probable ion channel SYM8 (894 aa).

The tract at residues methionine 1–lysine 124 is disordered. Composition is skewed to polar residues over residues glutamate 7–lysine 16, threonine 24–leucine 33, and isoleucine 44–tyrosine 63. The next 4 helical transmembrane spans lie at serine 134–leucine 154, threonine 204–isoleucine 224, leucine 267–valine 287, and isoleucine 319–valine 339. 2 consecutive RCK N-terminal domains span residues arginine 360–valine 501 and proline 620–isoleucine 769. Residues valine 390–glycine 415 are a coiled coil.

The protein belongs to the castor/pollux (TC 1.A.1.23) family. In terms of assembly, homotetramer.

The protein localises to the nucleus membrane. Functionally, required for both rhizobial and mycorrhizal symbiosis. Involved in Nod-factor-induced calcium spiking. May induce a change in membrane polarization that activates the opening of a calcium channel required for calcium spiking. Might be calcium gated. The sequence is that of Probable ion channel SYM8 (SYM8) from Pisum sativum (Garden pea).